The chain runs to 200 residues: Adenylyl-sulfate kinase (200 aa).

35-42 serves as a coordination point for ATP; the sequence is GLPASGKS. Catalysis depends on serine 109, which acts as the Phosphoserine intermediate.

It belongs to the APS kinase family.

It carries out the reaction adenosine 5'-phosphosulfate + ATP = 3'-phosphoadenylyl sulfate + ADP + H(+). It functions in the pathway sulfur metabolism; hydrogen sulfide biosynthesis; sulfite from sulfate: step 2/3. Functionally, catalyzes the synthesis of activated sulfate. The sequence is that of Adenylyl-sulfate kinase from Thermodesulfovibrio yellowstonii (strain ATCC 51303 / DSM 11347 / YP87).